The sequence spans 444 residues: Homogentisate 1,2-dioxygenase (444 aa).

Residue His-298 is the Proton acceptor of the active site. Fe cation-binding residues include His-341 and Glu-347. 2 residues coordinate homogentisate: Tyr-356 and His-377. His-377 provides a ligand contact to Fe cation.

Belongs to the homogentisate dioxygenase family. In terms of assembly, hexamer; dimer of trimers. Requires Fe cation as cofactor.

The enzyme catalyses homogentisate + O2 = 4-maleylacetoacetate + H(+). It participates in amino-acid degradation; L-phenylalanine degradation; acetoacetate and fumarate from L-phenylalanine: step 4/6. Functionally, involved in the catabolism of homogentisate (2,5-dihydroxyphenylacetate or 2,5-OH-PhAc), a central intermediate in the degradation of phenylalanine and tyrosine. Catalyzes the oxidative ring cleavage of the aromatic ring of homogentisate to yield maleylacetoacetate. The protein is Homogentisate 1,2-dioxygenase of Burkholderia lata (strain ATCC 17760 / DSM 23089 / LMG 22485 / NCIMB 9086 / R18194 / 383).